The chain runs to 190 residues: MFKNAFQSGFLSVLYSIGSKPLEIWDKQVSNGHIKRITDADIQSSVLEIMGQNVSTTYITCPADPNKTLGIKLPFLVLIIKNLNKYFSFEVQVLDDKNVRRRFRASNYQSTTRVKPFICTMPMRLDSGWNQIQFNLSDFTRRAYGTNYIETLRVQVHANCRIRRIYFSDRLYSEEELPAEFKLFLPIQKS.

It belongs to the CFAP20 family.

Its subcellular location is the cytoplasm. It is found in the cytoskeleton. The protein resides in the flagellum axoneme. It localises to the flagellum basal body. Functionally, cilium- and flagellum-specific protein that plays a role in axonemal structure organization and motility. Involved in the control of flagellar beating in an asymmetric and planar waveform. Stabilizes outer doublet microtubules (DMTs) of the axoneme and may work as a scaffold for intratubular proteins, such as tektin and PACRG, to produce the beak structures in DMT1, 5 and 6. Not essential for flagellar assembly. The protein is Cilia- and flagella-associated protein 20 (CFAP20) of Chlamydomonas reinhardtii (Chlamydomonas smithii).